Consider the following 314-residue polypeptide: Ribose-phosphate pyrophosphokinase (314 aa).

ATP-binding positions include aspartate 37–glutamate 39 and arginine 96–glutamine 97. Residues histidine 131 and aspartate 170 each coordinate Mg(2+). Lysine 194 is an active-site residue. Residues arginine 196, aspartate 220, and aspartate 224–threonine 228 each bind D-ribose 5-phosphate.

This sequence belongs to the ribose-phosphate pyrophosphokinase family. Class I subfamily. Homohexamer. The cofactor is Mg(2+).

It localises to the cytoplasm. It catalyses the reaction D-ribose 5-phosphate + ATP = 5-phospho-alpha-D-ribose 1-diphosphate + AMP + H(+). It participates in metabolic intermediate biosynthesis; 5-phospho-alpha-D-ribose 1-diphosphate biosynthesis; 5-phospho-alpha-D-ribose 1-diphosphate from D-ribose 5-phosphate (route I): step 1/1. Involved in the biosynthesis of the central metabolite phospho-alpha-D-ribosyl-1-pyrophosphate (PRPP) via the transfer of pyrophosphoryl group from ATP to 1-hydroxyl of ribose-5-phosphate (Rib-5-P). In Vibrio vulnificus (strain CMCP6), this protein is Ribose-phosphate pyrophosphokinase.